We begin with the raw amino-acid sequence, 139 residues long: Putative pre-16S rRNA nuclease (139 aa).

Belongs to the YqgF nuclease family.

Its subcellular location is the cytoplasm. Functionally, could be a nuclease involved in processing of the 5'-end of pre-16S rRNA. The sequence is that of Putative pre-16S rRNA nuclease from Streptococcus suis (strain 98HAH33).